A 316-amino-acid polypeptide reads, in one-letter code: Probable cell division protein WhiA (316 aa).

Positions 275 to 309 (TLKELGEMVSGGKISKSGINHRLRKIDEIAEKLRA) form a DNA-binding region, H-T-H motif.

Belongs to the WhiA family.

Its function is as follows. Involved in cell division and chromosome segregation. This is Probable cell division protein WhiA from Bacillus cytotoxicus (strain DSM 22905 / CIP 110041 / 391-98 / NVH 391-98).